The chain runs to 645 residues: Chaperone protein DnaK (645 aa).

A Phosphothreonine; by autocatalysis modification is found at Thr-199. Disordered regions lie at residues 509–530 (GALS…AEED) and 615–645 (EAGA…EVKE). Residues 518–530 (QMQKDAEANAEED) show a composition bias toward basic and acidic residues. Positions 615 to 626 (EAGADAAGAAGA) are enriched in low complexity. Acidic residues predominate over residues 631–645 (GDDDDAIDAEFEVKE).

Belongs to the heat shock protein 70 family.

In terms of biological role, acts as a chaperone. This chain is Chaperone protein DnaK, found in Rhodopirellula baltica (strain DSM 10527 / NCIMB 13988 / SH1).